Consider the following 214-residue polypeptide: Phosphatidylserine decarboxylase proenzyme (214 aa).

The Schiff-base intermediate with substrate; via pyruvic acid role is filled by S183. At S183 the chain carries Pyruvic acid (Ser); by autocatalysis.

Belongs to the phosphatidylserine decarboxylase family. PSD-A subfamily. Heterodimer of a large membrane-associated beta subunit and a small pyruvoyl-containing alpha subunit. Requires pyruvate as cofactor. Is synthesized initially as an inactive proenzyme. Formation of the active enzyme involves a self-maturation process in which the active site pyruvoyl group is generated from an internal serine residue via an autocatalytic post-translational modification. Two non-identical subunits are generated from the proenzyme in this reaction, and the pyruvate is formed at the N-terminus of the alpha chain, which is derived from the carboxyl end of the proenzyme. The post-translation cleavage follows an unusual pathway, termed non-hydrolytic serinolysis, in which the side chain hydroxyl group of the serine supplies its oxygen atom to form the C-terminus of the beta chain, while the remainder of the serine residue undergoes an oxidative deamination to produce ammonia and the pyruvoyl prosthetic group on the alpha chain.

It is found in the cell membrane. The catalysed reaction is a 1,2-diacyl-sn-glycero-3-phospho-L-serine + H(+) = a 1,2-diacyl-sn-glycero-3-phosphoethanolamine + CO2. Its pathway is phospholipid metabolism; phosphatidylethanolamine biosynthesis; phosphatidylethanolamine from CDP-diacylglycerol: step 2/2. In terms of biological role, catalyzes the formation of phosphatidylethanolamine (PtdEtn) from phosphatidylserine (PtdSer). The protein is Phosphatidylserine decarboxylase proenzyme of Chlorobaculum parvum (strain DSM 263 / NCIMB 8327) (Chlorobium vibrioforme subsp. thiosulfatophilum).